The chain runs to 325 residues: MGIFPGIILIFLRVKFATAAVIVSGHQKSSTLSHEMSGLNWKPFVYGGLASIVAEFGTFPVDLTKTRLQVQGQSIDVRFKEIKYRGMFHALFRIYKEEGILALYSGIAPALLRQASYGTIKIGIYQSLKRLFVERLEDETLLINMICGVVSGVISSTIANPTDVLKIRMQAQGSLFQGSMIGSFIDIYQQEGTRGLWRGVVPTAQRAAIVVGVELPVYDITKKHLIVSGMLGDTILTHFVSSFTCGLAGALASNPVDVVRTRMMNQRAIVGHVDLYKGTLDGILKMWKHEGFFALYKGFWPNWLRLGPWNIIFFITYEQLKRLQI.

6 helical membrane-spanning segments follow: residues glycine 38 to alanine 54, leucine 112 to leucine 128, methionine 145 to leucine 165, glycine 199 to leucine 215, valine 240 to valine 256, and glycine 298 to isoleucine 315. Solcar repeat units lie at residues lysine 42 to leucine 131, glutamate 139 to histidine 224, and aspartate 233 to leucine 323.

This sequence belongs to the mitochondrial carrier (TC 2.A.29) family. As to quaternary structure, homotetramer. Mainly expressed in brain, particularly abundant in cortex, hippocampus thalamus, amygdala and hypothalamus. Highly expressed in heart and kidney, but not liver or lung (at protein level). In the nervous system, expressed in cortex, basal ganglia, substantia nigra, cerebellum, and spinal cord (at protein level).

The protein localises to the mitochondrion inner membrane. The catalysed reaction is sulfite(in) + sulfate(out) = sulfite(out) + sulfate(in). It catalyses the reaction thiosulfate(in) + sulfate(out) = thiosulfate(out) + sulfate(in). It carries out the reaction sulfate(out) + phosphate(in) = sulfate(in) + phosphate(out). The enzyme catalyses oxalate(in) + sulfate(out) = oxalate(out) + sulfate(in). The catalysed reaction is malonate(in) + sulfate(out) = malonate(out) + sulfate(in). It catalyses the reaction maleate(in) + sulfate(out) = maleate(out) + sulfate(in). It carries out the reaction (S)-malate(in) + sulfate(out) = (S)-malate(out) + sulfate(in). The enzyme catalyses (3S)-citramalate(in) + sulfate(out) = (3S)-citramalate(out) + sulfate(in). The catalysed reaction is (3R)-citramalate(in) + sulfate(out) = (3R)-citramalate(out) + sulfate(in). It catalyses the reaction sulfate(out) + succinate(in) = sulfate(in) + succinate(out). It carries out the reaction (S,S)-tartrate(in) + sulfate(out) = (S,S)-tartrate(out) + sulfate(in). The enzyme catalyses (2R,3R)-tartrate(in) + sulfate(out) = (2R,3R)-tartrate(out) + sulfate(in). The catalysed reaction is D-aspartate(in) + sulfate(out) = D-aspartate(out) + sulfate(in). It catalyses the reaction L-aspartate(in) + sulfate(out) = L-aspartate(out) + sulfate(in). It carries out the reaction sulfate(in) = sulfate(out). The enzyme catalyses phosphate(in) = phosphate(out). The catalysed reaction is (S)-malate(out) = (S)-malate(in). It catalyses the reaction citrate(in) = citrate(out). It carries out the reaction L-aspartate(out) = L-aspartate(in). The enzyme catalyses L-glutamate(out) = L-glutamate(in). The catalysed reaction is H(+)(in) = H(+)(out). It catalyses the reaction chloride(in) = chloride(out). Transports inorganic anions (sulfate, sulfite, thiosulfate and phosphate) and, to a lesser extent, a variety of dicarboxylates (e.g. malonate, malate and citramalate) and, even more so, aspartate and glutamate and tricarboxylates. May catalyze the export of sulfite and thiosulfate (the hydrogen sulfide degradation products) from the mitochondria, thereby modulating the level of the hydrogen sulfide. Also can mediate a very low unidirectional transport of anions including sulfate, phosphate, (S)-malate, citrate, L-aspartate and L-glutamate. Maintains oxidative balance (through uncoupling activities) and ATP production (by modifying mitochondrial membrane potential). Is able to transport protons across lipid membranes. Also exhibits transmembrane chloride transport activity to a lesser extent. May modify mitochondrial respiratory efficiency and mitochondrial oxidant production. This is Brain mitochondrial carrier protein 1 from Mus musculus (Mouse).